Here is a 306-residue protein sequence, read N- to C-terminus: Probable dimethyladenosine transferase (306 aa).

S-adenosyl-L-methionine is bound by residues His30, Leu32, Gly57, Glu78, Asp106, and Asn121.

The protein belongs to the class I-like SAM-binding methyltransferase superfamily. rRNA adenine N(6)-methyltransferase family. Part of the small subunit (SSU) processome, composed of more than 70 proteins and the RNA chaperone small nucleolar RNA (snoRNA) U3.

It is found in the nucleus. Its subcellular location is the nucleolus. It carries out the reaction adenosine(1779)/adenosine(1780) in 18S rRNA + 4 S-adenosyl-L-methionine = N(6)-dimethyladenosine(1779)/N(6)-dimethyladenosine(1780) in 18S rRNA + 4 S-adenosyl-L-homocysteine + 4 H(+). In terms of biological role, specifically dimethylates two adjacent adenosines in the loop of a conserved hairpin near the 3'-end of 18S rRNA in the 40S particle. Involved in the pre-rRNA processing steps leading to small-subunit rRNA production independently of its RNA-modifying catalytic activity. Part of the small subunit (SSU) processome, first precursor of the small eukaryotic ribosomal subunit. During the assembly of the SSU processome in the nucleolus, many ribosome biogenesis factors, an RNA chaperone and ribosomal proteins associate with the nascent pre-rRNA and work in concert to generate RNA folding, modifications, rearrangements and cleavage as well as targeted degradation of pre-ribosomal RNA by the RNA exosome. This Drosophila melanogaster (Fruit fly) protein is Probable dimethyladenosine transferase.